The chain runs to 273 residues: Undecaprenyl-diphosphatase (273 aa).

Helical transmembrane passes span 1-21 (MEPI…FLPV), 39-59 (PALF…LIVF), 63-83 (LGMM…GIAP), 92-112 (LKLA…GLGL), 118-138 (LFFS…LLWL), 165-185 (GLAV…GLFL), 195-215 (FSFL…AVDL), 225-245 (ATVL…KVLI), and 252-272 (RFYL…WIGM).

The protein belongs to the UppP family.

The protein resides in the cell inner membrane. The enzyme catalyses di-trans,octa-cis-undecaprenyl diphosphate + H2O = di-trans,octa-cis-undecaprenyl phosphate + phosphate + H(+). Its function is as follows. Catalyzes the dephosphorylation of undecaprenyl diphosphate (UPP). Confers resistance to bacitracin. The protein is Undecaprenyl-diphosphatase of Desulfosudis oleivorans (strain DSM 6200 / JCM 39069 / Hxd3) (Desulfococcus oleovorans).